We begin with the raw amino-acid sequence, 152 residues long: Deoxyuridine 5'-triphosphate nucleotidohydrolase (152 aa).

Residues 71-73, N84, 88-90, and M98 contribute to the substrate site; these read RSG and LID.

Belongs to the dUTPase family. Mg(2+) serves as cofactor.

The catalysed reaction is dUTP + H2O = dUMP + diphosphate + H(+). It participates in pyrimidine metabolism; dUMP biosynthesis; dUMP from dCTP (dUTP route): step 2/2. In terms of biological role, this enzyme is involved in nucleotide metabolism: it produces dUMP, the immediate precursor of thymidine nucleotides and it decreases the intracellular concentration of dUTP so that uracil cannot be incorporated into DNA. The protein is Deoxyuridine 5'-triphosphate nucleotidohydrolase of Shewanella loihica (strain ATCC BAA-1088 / PV-4).